Reading from the N-terminus, the 105-residue chain is MHIKKGDNVKVIAGKDKGKEGKVVATEPKKDRVVVEGVNVIKKHQKPTQLNPEGGILETEAAIHVSNVQLLDPKTNEPTRVGYKTVDGKKVRIAKKSGEEIKANN.

The protein belongs to the universal ribosomal protein uL24 family. In terms of assembly, part of the 50S ribosomal subunit.

Functionally, one of two assembly initiator proteins, it binds directly to the 5'-end of the 23S rRNA, where it nucleates assembly of the 50S subunit. One of the proteins that surrounds the polypeptide exit tunnel on the outside of the subunit. This chain is Large ribosomal subunit protein uL24, found in Staphylococcus epidermidis (strain ATCC 35984 / DSM 28319 / BCRC 17069 / CCUG 31568 / BM 3577 / RP62A).